A 357-amino-acid chain; its full sequence is 3-isopropylmalate dehydrogenase (357 aa).

Residues Arg-99, Arg-109, Arg-133, and Asp-223 each coordinate substrate. Positions 223, 247, and 251 each coordinate Mg(2+). 283-295 contributes to the NAD(+) binding site; sequence GSAPDIAGEQRAD.

The protein belongs to the isocitrate and isopropylmalate dehydrogenases family. LeuB type 2 subfamily. Homodimer. Mg(2+) is required as a cofactor. Requires Mn(2+) as cofactor.

The protein localises to the cytoplasm. It catalyses the reaction (2R,3S)-3-isopropylmalate + NAD(+) = 4-methyl-2-oxopentanoate + CO2 + NADH. It participates in amino-acid biosynthesis; L-leucine biosynthesis; L-leucine from 3-methyl-2-oxobutanoate: step 3/4. Catalyzes the oxidation of 3-carboxy-2-hydroxy-4-methylpentanoate (3-isopropylmalate) to 3-carboxy-4-methyl-2-oxopentanoate. The product decarboxylates to 4-methyl-2 oxopentanoate. The polypeptide is 3-isopropylmalate dehydrogenase (Leifsonia xyli subsp. xyli (strain CTCB07)).